Reading from the N-terminus, the 440-residue chain is ATP-dependent protease ATPase subunit HslU (440 aa).

Residues isoleucine 18, glycine 60–glutamate 65, aspartate 253, glutamate 318, and arginine 390 each bind ATP.

The protein belongs to the ClpX chaperone family. HslU subfamily. As to quaternary structure, a double ring-shaped homohexamer of HslV is capped on each side by a ring-shaped HslU homohexamer. The assembly of the HslU/HslV complex is dependent on binding of ATP.

It localises to the cytoplasm. Functionally, ATPase subunit of a proteasome-like degradation complex; this subunit has chaperone activity. The binding of ATP and its subsequent hydrolysis by HslU are essential for unfolding of protein substrates subsequently hydrolyzed by HslV. HslU recognizes the N-terminal part of its protein substrates and unfolds these before they are guided to HslV for hydrolysis. This chain is ATP-dependent protease ATPase subunit HslU, found in Shewanella oneidensis (strain ATCC 700550 / JCM 31522 / CIP 106686 / LMG 19005 / NCIMB 14063 / MR-1).